The primary structure comprises 85 residues: Homeobox protein liguleless 3 (85 aa).

Positions 1–21 constitute an ELK domain; sequence ELKEMLLKKYSGCLSRLRSEF. Residues 22 to 85 constitute a DNA-binding region (homeobox; TALE-type); it reads LKKRKKGKLP…NQRKRHWKPS (64 aa).

It belongs to the TALE/KNOX homeobox family.

The protein localises to the nucleus. Its function is as follows. Probably binds to the DNA sequence 5'-TGAC-3'. The polypeptide is Homeobox protein liguleless 3 (LG3) (Zea mays (Maize)).